A 310-amino-acid chain; its full sequence is Aspartate carbamoyltransferase catalytic subunit (310 aa).

Arg58 and Thr59 together coordinate carbamoyl phosphate. Position 86 (Lys86) interacts with L-aspartate. 3 residues coordinate carbamoyl phosphate: Arg108, His136, and Gln139. L-aspartate-binding residues include Arg169 and Arg224. Residues Gly265 and Pro266 each coordinate carbamoyl phosphate.

This sequence belongs to the aspartate/ornithine carbamoyltransferase superfamily. ATCase family. In terms of assembly, heterododecamer (2C3:3R2) of six catalytic PyrB chains organized as two trimers (C3), and six regulatory PyrI chains organized as three dimers (R2).

The catalysed reaction is carbamoyl phosphate + L-aspartate = N-carbamoyl-L-aspartate + phosphate + H(+). It participates in pyrimidine metabolism; UMP biosynthesis via de novo pathway; (S)-dihydroorotate from bicarbonate: step 2/3. In terms of biological role, catalyzes the condensation of carbamoyl phosphate and aspartate to form carbamoyl aspartate and inorganic phosphate, the committed step in the de novo pyrimidine nucleotide biosynthesis pathway. The polypeptide is Aspartate carbamoyltransferase catalytic subunit (Geobacter sp. (strain M21)).